The chain runs to 679 residues: DNA-directed RNA polymerase subunit beta' (679 aa).

Zn(2+) is bound by residues Cys-69, Cys-71, Cys-87, and Cys-90. Residues Asp-489, Asp-491, and Asp-493 each coordinate Mg(2+).

It belongs to the RNA polymerase beta' chain family. RpoC1 subfamily. As to quaternary structure, in plastids the minimal PEP RNA polymerase catalytic core is composed of four subunits: alpha, beta, beta', and beta''. When a (nuclear-encoded) sigma factor is associated with the core the holoenzyme is formed, which can initiate transcription. The cofactor is Mg(2+). Zn(2+) is required as a cofactor.

It is found in the plastid. Its subcellular location is the chloroplast. It carries out the reaction RNA(n) + a ribonucleoside 5'-triphosphate = RNA(n+1) + diphosphate. DNA-dependent RNA polymerase catalyzes the transcription of DNA into RNA using the four ribonucleoside triphosphates as substrates. This chain is DNA-directed RNA polymerase subunit beta', found in Phalaenopsis aphrodite subsp. formosana (Moth orchid).